The primary structure comprises 540 residues: FAD-binding monooxygenase lolF1 (540 aa).

FAD contacts are provided by residues 43-46 (VWRE) and 55-58 (DSLF). NADP(+) is bound by residues 53–55 (AVD), 182–188 (TGPSGVQ), and 205–206 (QS).

Belongs to the FAD-binding monooxygenase family. It depends on FAD as a cofactor.

Its pathway is alkaloid biosynthesis. Its function is as follows. FAD-binding monooxygenase; part of the gene cluster that mediates the biosynthesis of loline alkaloids, potent insecticidal agents composed of a pyrrolizidine ring system and an uncommon ether bridge linking carbons 2 and 7. Lolines are structurally differentiated by the various modifications of the L-amino group and include norloline, loline, N-methylloline, N-acetylloline, N-acetylnorloline, and N-formylloline. The first committed step is the condensation of O-acetyl-L-homoserine (derived from L-aspartic acid) and L-proline, probably catalyzed by the gamma-type pyridoxal 5'-phosphate(PLP)-dependent enzyme lolC, to give the diamino diacid, NACPP. Ensuing cyclization, decarboxylation, and acetylation steps yield 1-exo-acetamidopyrrolizidine (AcAP). LolO is required for installation of the ether bridge upon the pathway intermediate, 1-exo-acetamidopyrrolizidine (AcAP). In sequential 2-oxoglutarate- and O(2)-consuming steps, lolO removes hydrogens from C2 and C7 of AcAP to form both carbon-oxygen bonds in N-acetylnorloline (NANL), the precursor to all other lolines. The enzymes lolD, lolE, lolF and lolT have also been proposed to be involved in the ether-bridge installation. Further processing of the exocyclic moiety of NANL by fungal N-acetamidase (LolN), methyltransferase (LolM), and cytochrome P450 (LolP) enzymes, with occasional involvement of a plant acetyltransferase, generates the other known lolines. LolN transforms NANL to norlonine which is monomethylated and dimethylated to respectively lonine and N-methyllonine (NML) by lolM. LolP catalyzes hydroxylation of the methyl group in N-methylloline (NML) and further oxygenation to N-formylloline (NFL). A plant acetyltransferase is responsible for the acetylation of loline to form N-acetylloline (NAL). LolA might interact with aspartate kinase to prevent feedback inhibition of its activity by these end products and thereby promote production of L-homoserine from L-aspartate. This is FAD-binding monooxygenase lolF1 from Epichloe uncinata (Endophyte fungus).